The sequence spans 101 residues: Small ribosomal subunit protein uS14 (101 aa).

This sequence belongs to the universal ribosomal protein uS14 family. Part of the 30S ribosomal subunit. Contacts proteins S3 and S10.

Binds 16S rRNA, required for the assembly of 30S particles and may also be responsible for determining the conformation of the 16S rRNA at the A site. The chain is Small ribosomal subunit protein uS14 from Tropheryma whipplei (strain TW08/27) (Whipple's bacillus).